Consider the following 517-residue polypeptide: Glucans biosynthesis protein G (517 aa).

The first 28 residues, 1-28, serve as a signal peptide directing secretion; that stretch reads MKHKLQMMKMRWLSAAVMLTLYTSSSWA.

Belongs to the OpgD/OpgG family.

The protein localises to the periplasm. The protein operates within glycan metabolism; osmoregulated periplasmic glucan (OPG) biosynthesis. Functionally, involved in the biosynthesis of osmoregulated periplasmic glucans (OPGs). The sequence is that of Glucans biosynthesis protein G from Escherichia coli O1:K1 / APEC.